The following is a 632-amino-acid chain: Armadillo repeat-containing X-linked protein 2 (632 aa).

Residues 1 to 6 (MSRVRD) lie on the Mitochondrial intermembrane side of the membrane. Positions 1 to 6 (MSRVRD) are mitochondrion outer membrane (MOM)-targeting sequence. The helical; Signal-anchor transmembrane segment at 7–25 (AGCVAAGIVIGAGAWYCVY) threads the bilayer. A mitochondrion outer membrane (MOM)-targeting sequence region spans residues 26–40 (KYTRGRDQTKKRMAK). Over 26-632 (KYTRGRDQTK…VKVIKLVNKF (607 aa)) the chain is Cytoplasmic. Disordered regions lie at residues 68–124 (GFSP…AGVG), 160–304 (APKV…KVEV), and 335–369 (VPDS…RPVA). Low complexity-rich tracts occupy residues 86-120 (EASA…EADG) and 211-241 (VASP…SPGT). Residues 336–356 (PDSEEGESGWTDTESDSDSEP) are compositionally biased toward acidic residues. ARM repeat units lie at residues 376–416 (PYEI…NNAN), 418–457 (SCNQ…NLSE), and 498–537 (ITND…NFAE).

It belongs to the eutherian X-chromosome-specific Armcx family. Expressed at high levels ovary, heart, testis, prostate, brain, spleen and colon. Expressed at very low levels in liver and thymus. Not expressed in peripheral blood leukocytes. Not expressed in pancreas and ovarian carcinomas.

The protein resides in the mitochondrion. Its subcellular location is the mitochondrion outer membrane. In terms of biological role, may regulate the dynamics and distribution of mitochondria in neural cells. The sequence is that of Armadillo repeat-containing X-linked protein 2 (ARMCX2) from Homo sapiens (Human).